The sequence spans 374 residues: Phosphate acyltransferase (374 aa).

This sequence belongs to the PlsX family. Homodimer. Probably interacts with PlsY.

It localises to the cytoplasm. It carries out the reaction a fatty acyl-[ACP] + phosphate = an acyl phosphate + holo-[ACP]. The protein operates within lipid metabolism; phospholipid metabolism. Its function is as follows. Catalyzes the reversible formation of acyl-phosphate (acyl-PO(4)) from acyl-[acyl-carrier-protein] (acyl-ACP). This enzyme utilizes acyl-ACP as fatty acyl donor, but not acyl-CoA. The protein is Phosphate acyltransferase of Gluconacetobacter diazotrophicus (strain ATCC 49037 / DSM 5601 / CCUG 37298 / CIP 103539 / LMG 7603 / PAl5).